A 456-amino-acid chain; its full sequence is Enolase (456 aa).

Position 164 (Q164) interacts with (2R)-2-phosphoglycerate. E207 serves as the catalytic Proton donor. Positions 244, 287, and 314 each coordinate Mg(2+). 4 residues coordinate (2R)-2-phosphoglycerate: K339, R368, S369, and K390. K339 (proton acceptor) is an active-site residue.

The protein belongs to the enolase family. As to quaternary structure, component of the RNA degradosome, a multiprotein complex involved in RNA processing and mRNA degradation. The cofactor is Mg(2+).

Its subcellular location is the cytoplasm. The protein resides in the secreted. It localises to the cell surface. The catalysed reaction is (2R)-2-phosphoglycerate = phosphoenolpyruvate + H2O. It participates in carbohydrate degradation; glycolysis; pyruvate from D-glyceraldehyde 3-phosphate: step 4/5. Catalyzes the reversible conversion of 2-phosphoglycerate (2-PG) into phosphoenolpyruvate (PEP). It is essential for the degradation of carbohydrates via glycolysis. The sequence is that of Enolase from Francisella tularensis subsp. novicida (strain U112).